The chain runs to 477 residues: Bifunctional protein HldE (477 aa).

The ribokinase stretch occupies residues 1-318; that stretch reads MKVNLPAFER…ENAVRGRADT (318 aa). Residue 195–198 coordinates ATP; it reads NLSE. D264 is a catalytic residue. The cytidylyltransferase stretch occupies residues 344-477; sequence MTNGVFDILH…IKKIQTESEK (134 aa).

It in the N-terminal section; belongs to the carbohydrate kinase PfkB family. In the C-terminal section; belongs to the cytidylyltransferase family. In terms of assembly, homodimer.

It catalyses the reaction D-glycero-beta-D-manno-heptose 7-phosphate + ATP = D-glycero-beta-D-manno-heptose 1,7-bisphosphate + ADP + H(+). The enzyme catalyses D-glycero-beta-D-manno-heptose 1-phosphate + ATP + H(+) = ADP-D-glycero-beta-D-manno-heptose + diphosphate. Its pathway is nucleotide-sugar biosynthesis; ADP-L-glycero-beta-D-manno-heptose biosynthesis; ADP-L-glycero-beta-D-manno-heptose from D-glycero-beta-D-manno-heptose 7-phosphate: step 1/4. The protein operates within nucleotide-sugar biosynthesis; ADP-L-glycero-beta-D-manno-heptose biosynthesis; ADP-L-glycero-beta-D-manno-heptose from D-glycero-beta-D-manno-heptose 7-phosphate: step 3/4. Functionally, catalyzes the phosphorylation of D-glycero-D-manno-heptose 7-phosphate at the C-1 position to selectively form D-glycero-beta-D-manno-heptose-1,7-bisphosphate. Catalyzes the ADP transfer from ATP to D-glycero-beta-D-manno-heptose 1-phosphate, yielding ADP-D-glycero-beta-D-manno-heptose. This chain is Bifunctional protein HldE, found in Salmonella dublin (strain CT_02021853).